Reading from the N-terminus, the 851-residue chain is DNA mismatch repair protein MutS (851 aa).

ATP is bound at residue 602–609; the sequence is GPNMSGKS.

It belongs to the DNA mismatch repair MutS family.

Its function is as follows. This protein is involved in the repair of mismatches in DNA. It is possible that it carries out the mismatch recognition step. This protein has a weak ATPase activity. The sequence is that of DNA mismatch repair protein MutS from Streptococcus pyogenes serotype M49 (strain NZ131).